The chain runs to 372 residues: Coxsackievirus and adenovirus receptor homolog (372 aa).

An N-terminal signal peptide occupies residues 1–22 (MDMRTSFLCVTYVILLTGSACG). Ig-like C2-type domains are found at residues 23-140 (LQIT…YLLT) and 130-234 (PGIA…VTIT). The Extracellular segment spans residues 23 to 241 (LQITSTGQTS…TITQPPNTAG (219 aa)). Cystine bridges form between C45–C124, C150–C227, and C166–C216. N205 is a glycosylation site (N-linked (GlcNAc...) asparagine). A helical membrane pass occupies residues 242 to 262 (IIAGVIICILLLLILLALILF). Over 263 to 372 (CCCRARHKKK…PAQNKDGSIV (110 aa)) the chain is Cytoplasmic. Residues 286–352 (PPPKSRVSTA…PPSRMAGPNL (67 aa)) are disordered. Positions 291–317 (RVSTARSFTSVGSQRSSLGSMSPSNLH) are enriched in polar residues. A compositionally biased stretch (basic and acidic residues) spans 318–336 (EYSKPQYDKIPSEEYDRPP).

In terms of assembly, monomer. Probably homodimer formed by 2 molecules on adjacent cells.

The protein localises to the cell membrane. Its subcellular location is the basolateral cell membrane. It localises to the cell junction. It is found in the tight junction. The protein resides in the adherens junction. May function as a homophilic cell adhesion molecule and be essential for tight junction integrity. May also be involved in transepithelial migration of leukocytes through adhesive interactions with jaml. The interaction between both receptors may also mediate the activation of gamma-delta T-cells, a subpopulation of T-cells residing in epithelia and involved in tissue homeostasis and repair. In Danio rerio (Zebrafish), this protein is Coxsackievirus and adenovirus receptor homolog (cxadr).